The primary structure comprises 460 residues: Glycogen synthase (460 aa).

Residue Lys15 participates in ADP-alpha-D-glucose binding.

This sequence belongs to the glycosyltransferase 1 family. Bacterial/plant glycogen synthase subfamily.

It catalyses the reaction [(1-&gt;4)-alpha-D-glucosyl](n) + ADP-alpha-D-glucose = [(1-&gt;4)-alpha-D-glucosyl](n+1) + ADP + H(+). Its pathway is glycan biosynthesis; glycogen biosynthesis. In terms of biological role, synthesizes alpha-1,4-glucan chains using ADP-glucose. This chain is Glycogen synthase, found in Trichodesmium erythraeum (strain IMS101).